Reading from the N-terminus, the 309-residue chain is Sulfate adenylyltransferase subunit 2 (309 aa).

This sequence belongs to the PAPS reductase family. CysD subfamily. Heterodimer composed of CysD, the smaller subunit, and CysN.

The catalysed reaction is sulfate + ATP + H(+) = adenosine 5'-phosphosulfate + diphosphate. The protein operates within sulfur metabolism; hydrogen sulfide biosynthesis; sulfite from sulfate: step 1/3. In terms of biological role, with CysN forms the ATP sulfurylase (ATPS) that catalyzes the adenylation of sulfate producing adenosine 5'-phosphosulfate (APS) and diphosphate, the first enzymatic step in sulfur assimilation pathway. APS synthesis involves the formation of a high-energy phosphoric-sulfuric acid anhydride bond driven by GTP hydrolysis by CysN coupled to ATP hydrolysis by CysD. The protein is Sulfate adenylyltransferase subunit 2 of Mycolicibacterium gilvum (strain PYR-GCK) (Mycobacterium gilvum (strain PYR-GCK)).